We begin with the raw amino-acid sequence, 353 residues long: 2-oxoglutarate-Fe(II) type oxidoreductase ppzD (353 aa).

Positions 181 to 292 constitute a Fe2OG dioxygenase domain; sequence NTSELRLNHY…RYSVAYFGKP (112 aa). Fe cation contacts are provided by His-208, Asp-210, and His-268. Arg-283 serves as a coordination point for 2-oxoglutarate.

This sequence belongs to the iron/ascorbate-dependent oxidoreductase family. The cofactor is Fe(2+).

The catalysed reaction is L-proline + 2-oxoglutarate + O2 = trans-4-hydroxy-L-proline + succinate + CO2. It catalyses the reaction L-proline + 2-oxoglutarate + O2 = trans-3-hydroxy-L-proline + succinate + CO2. The enzyme catalyses D-proline + 2-oxoglutarate + O2 = cis-4-hydroxy-D-proline + succinate + CO2. Its pathway is secondary metabolite biosynthesis. In terms of biological role, 2-oxoglutarate-Fe(II) type oxidoreductase; part of the gene cluster that mediates the biosynthesis of pyrrolopyrazines, secondary metabolites showing insecticidal activity. Within the pathway, ppzD converts L-proline into trans-4-hydroxy-L-proline as a major product, yielding a key precursor for peramine biosynthesis. PpzD is also able to convert L-proline into trans-3-hydroxy-L-proline. The single multifunctional NRPS ppzA is sufficient to produce peramine via condensation of 1-pyrroline-5-carboxylate and arginine, N-methylation of the alpha-amino group of arginine and reduction of the thioester and the cyclization to form an iminium ion resulting in release from the peptide synthetase. Deprotonation of this intermediate and oxidation of the pyrroline ring would give rise to peramine. In Epichloe species that produce only peramine, the peramine synthetase gene is not localized in a gene cluster, in contrast to Metarhizium species that contain additional pyrrolopyrazine biosynthesis genes. The 2-oxoglutarate-Fe(II) type oxidoreductase ppzC hydroxylates peramine to yield the newly identified compound 8-hydroxyperamine whereas ppzD converts L-proline into trans-4-hydroxy-L-proline, a precursor of peramine biosynthesis. The chain is 2-oxoglutarate-Fe(II) type oxidoreductase ppzD from Metarhizium rileyi (strain RCEF 4871) (Nomuraea rileyi).